The chain runs to 491 residues: UDP-N-acetylmuramate--L-alanine ligase (491 aa).

ATP is bound at residue 126 to 132 (GTHGKTT).

This sequence belongs to the MurCDEF family.

The protein localises to the cytoplasm. It carries out the reaction UDP-N-acetyl-alpha-D-muramate + L-alanine + ATP = UDP-N-acetyl-alpha-D-muramoyl-L-alanine + ADP + phosphate + H(+). Its pathway is cell wall biogenesis; peptidoglycan biosynthesis. Functionally, cell wall formation. This is UDP-N-acetylmuramate--L-alanine ligase from Shigella sonnei (strain Ss046).